The chain runs to 187 residues: Adenylate kinase (187 aa).

10-15 (GSGKGT) contacts ATP. The NMP stretch occupies residues 30–59 (STGDLLRAEVAAGSPLGVKAKEVMARGDLV). Residues Thr-31, Arg-36, 57-59 (DLV), 85-88 (GYPR), and Gln-92 contribute to the AMP site. Residues 126–136 (GRAKAEGREDD) form an LID region. Position 127 (Arg-127) interacts with ATP. The AMP site is built by Arg-133 and Arg-144. Gly-172 contacts ATP.

The protein belongs to the adenylate kinase family. Monomer.

The protein localises to the cytoplasm. It catalyses the reaction AMP + ATP = 2 ADP. It functions in the pathway purine metabolism; AMP biosynthesis via salvage pathway; AMP from ADP: step 1/1. Functionally, catalyzes the reversible transfer of the terminal phosphate group between ATP and AMP. Plays an important role in cellular energy homeostasis and in adenine nucleotide metabolism. This chain is Adenylate kinase, found in Xanthomonas campestris pv. campestris (strain B100).